Reading from the N-terminus, the 125-residue chain is Small ribosomal subunit protein uS12m (125 aa).

Residues 1 to 51 (MPTKNQLIRHGREEKRRTDRTRALDQCPQKQGVCPRVSTRTPKKPNSAPRK) are disordered. A compositionally biased stretch (basic and acidic residues) spans 10 to 23 (HGREEKRRTDRTRA).

This sequence belongs to the universal ribosomal protein uS12 family.

Its subcellular location is the mitochondrion. In terms of biological role, protein S12 is involved in the translation initiation step. The sequence is that of Small ribosomal subunit protein uS12m (RPS12) from Nicotiana sylvestris (Wood tobacco).